A 111-amino-acid chain; its full sequence is Large ribosomal subunit protein uL22 (111 aa).

This sequence belongs to the universal ribosomal protein uL22 family. In terms of assembly, part of the 50S ribosomal subunit.

Functionally, this protein binds specifically to 23S rRNA; its binding is stimulated by other ribosomal proteins, e.g. L4, L17, and L20. It is important during the early stages of 50S assembly. It makes multiple contacts with different domains of the 23S rRNA in the assembled 50S subunit and ribosome. Its function is as follows. The globular domain of the protein is located near the polypeptide exit tunnel on the outside of the subunit, while an extended beta-hairpin is found that lines the wall of the exit tunnel in the center of the 70S ribosome. This chain is Large ribosomal subunit protein uL22, found in Pelobacter propionicus (strain DSM 2379 / NBRC 103807 / OttBd1).